The primary structure comprises 65 residues: Large ribosomal subunit protein bL35 (65 aa).

Positions 1–65 (MPKMKTNRAA…GRLDRMLPYL (65 aa)) are disordered. The segment covering 10–44 (AAKRFRKTASGKYKAGHANRSHILTKKATKRKRNL) has biased composition (basic residues). Over residues 50-65 (VRAEDAGRLDRMLPYL) the composition is skewed to basic and acidic residues.

It belongs to the bacterial ribosomal protein bL35 family.

The polypeptide is Large ribosomal subunit protein bL35 (Xylella fastidiosa (strain M12)).